Consider the following 454-residue polypeptide: tRNA modification GTPase MnmE (454 aa).

(6S)-5-formyl-5,6,7,8-tetrahydrofolate contacts are provided by Arg23, Glu80, and Lys120. The region spanning 216–377 (GMKVVIAGRP…LRNHLKQSMG (162 aa)) is the TrmE-type G domain. Asn226 provides a ligand contact to K(+). GTP is bound by residues 226 to 231 (NAGKSS), 245 to 251 (TDIAGTT), 270 to 273 (DTAG), 335 to 338 (NKAD), and 358 to 360 (SAR). Ser230 contributes to the Mg(2+) binding site. 3 residues coordinate K(+): Thr245, Ile247, and Thr250. Thr251 is a binding site for Mg(2+). Lys454 contributes to the (6S)-5-formyl-5,6,7,8-tetrahydrofolate binding site.

This sequence belongs to the TRAFAC class TrmE-Era-EngA-EngB-Septin-like GTPase superfamily. TrmE GTPase family. In terms of assembly, homodimer. Heterotetramer of two MnmE and two MnmG subunits. The cofactor is K(+).

The protein localises to the cytoplasm. In terms of biological role, exhibits a very high intrinsic GTPase hydrolysis rate. Involved in the addition of a carboxymethylaminomethyl (cmnm) group at the wobble position (U34) of certain tRNAs, forming tRNA-cmnm(5)s(2)U34. This chain is tRNA modification GTPase MnmE, found in Enterobacter sp. (strain 638).